We begin with the raw amino-acid sequence, 1255 residues long: TBC1 domain family member 1 (1255 aa).

S146 is subject to Phosphoserine. A disordered region spans residues 208-228 (RTDWEAPTGQPSAPGPRPMRK). S229 is modified (phosphoserine; by PKB/AKT1). The residue at position 231 (S231) is a Phosphoserine; by AMPK. The region spanning 238–398 (LAFRKEFQDA…LHKLCERIEG (161 aa)) is the PID domain. S489 bears the Phosphoserine; by PKB/AKT1 mark. Residue S497 is modified to Phosphoserine. T499 is modified (phosphothreonine; by PKB/AKT1). Residues S501, S519, S521, S559, S560, S564, S565, and S579 each carry the phosphoserine modification. Disordered regions lie at residues 509–544 (GNKA…MGDK) and 559–581 (SSDD…LSPQ). Residues 519–539 (SASVDLDSSTSSTLSNTSKEL) show a composition bias toward low complexity. T590 carries the post-translational modification Phosphothreonine. 2 disordered regions span residues 595–614 (PVEC…VSQR) and 621–681 (SVST…GNAV). Residue S608 is modified to Phosphoserine. Residue S621 is modified to Phosphoserine; by PKB/AKT1. Phosphoserine is present on residues S660 and S661. The segment covering 670–679 (HNSSGEQSGN) has biased composition (polar residues). S697 carries the phosphoserine; by PKB/AKT1 modification. Residues S698 and S699 each carry the phosphoserine modification. S700 carries the phosphoserine; by AMPK modification. Residues 764–786 (DSPSRYEDYSELGELPPRSPLEP) form a disordered region. Phosphoserine is present on residues S782 and S1028. Residues 887-1081 (GVPRHHRGEI…RVFDMIFLQG (195 aa)) form the Rab-GAP TBC domain. Y1039 carries the phosphotyrosine modification. At T1218 the chain carries Phosphothreonine. A disordered region spans residues 1233 to 1255 (LRRQSARPSTPEPDCTQLEPTGD).

As to quaternary structure, interacts with APPL2 (via BAR domain); interaction is dependent of TBC1D1 phosphorylation at Ser-229; interaction diminishes the phosphorylation of TBC1D1 at Thr-590, resulting in inhibition of SLC2A4/GLUT4 translocation and glucose uptake. Post-translationally, insulin-stimulated phosphorylation by AKT family kinases stimulates SLC2A4/GLUT4 translocation. In terms of tissue distribution, expressed in highest levels in hematopoietic cells, testis and kidney.

It localises to the nucleus. Functionally, may act as a GTPase-activating protein for Rab family protein(s). May play a role in the cell cycle and differentiation of various tissues. Involved in the trafficking and translocation of GLUT4-containing vesicles and insulin-stimulated glucose uptake into cells. The chain is TBC1 domain family member 1 (Tbc1d1) from Mus musculus (Mouse).